We begin with the raw amino-acid sequence, 325 residues long: Hydroxymethylglutaryl-CoA lyase, mitochondrial (325 aa).

The N-terminal 27 residues, 1-27, are a transit peptide targeting the mitochondrion; the sequence is MAAMTKALPRRLVGLASLRAVSTSSMD. Residues 33–300 form the Pyruvate carboxyltransferase domain; sequence VKIVEVGPRD…HTGVNLQKLL (268 aa). Residue arginine 41 coordinates substrate. Residue aspartate 42 participates in a divalent metal cation binding. At lysine 48 the chain carries N6-acetyllysine; alternate. Lysine 48 carries the N6-succinyllysine; alternate modification. Lysine 111 is subject to N6-acetyllysine. Lysine 137 and lysine 179 each carry N6-acetyllysine; alternate. Residues lysine 137 and lysine 179 each carry the N6-succinyllysine; alternate modification. Positions 233 and 235 each coordinate a divalent metal cation. Residue cysteine 266 is part of the active site. Asparagine 275 is a binding site for a divalent metal cation. A Microbody targeting signal motif is present at residues 323 to 325; that stretch reads CKL. Position 324 is an N6-acetyllysine (lysine 324).

Belongs to the HMG-CoA lyase family. As to quaternary structure, homodimer; disulfide-linked. Can also form homotetramers.

It is found in the mitochondrion matrix. The protein resides in the peroxisome. It carries out the reaction (3S)-3-hydroxy-3-methylglutaryl-CoA = acetoacetate + acetyl-CoA. The protein operates within metabolic intermediate metabolism; (S)-3-hydroxy-3-methylglutaryl-CoA degradation; acetoacetate from (S)-3-hydroxy-3-methylglutaryl-CoA: step 1/1. In terms of biological role, mitochondrial 3-hydroxy-3-methylglutaryl-CoA lyase that catalyzes a cation-dependent cleavage of (S)-3-hydroxy-3-methylglutaryl-CoA into acetyl-CoA and acetoacetate, a key step in ketogenesis. Terminal step in leucine catabolism. Ketone bodies (beta-hydroxybutyrate, acetoacetate and acetone) are essential as an alternative source of energy to glucose, as lipid precursors and as regulators of metabolism. This is Hydroxymethylglutaryl-CoA lyase, mitochondrial (HMGCL) from Macaca fascicularis (Crab-eating macaque).